Consider the following 70-residue polypeptide: Large ribosomal subunit protein bL31 (70 aa).

Residues Cys-16, Cys-18, Cys-37, and Cys-40 each coordinate Zn(2+).

This sequence belongs to the bacterial ribosomal protein bL31 family. Type A subfamily. As to quaternary structure, part of the 50S ribosomal subunit. Zn(2+) is required as a cofactor.

Functionally, binds the 23S rRNA. This chain is Large ribosomal subunit protein bL31, found in Salmonella agona (strain SL483).